A 209-amino-acid chain; its full sequence is Thymidylate kinase (209 aa).

10 to 17 (GIDGCGKS) contributes to the ATP binding site.

Belongs to the thymidylate kinase family.

The enzyme catalyses dTMP + ATP = dTDP + ADP. Phosphorylation of dTMP to form dTDP in both de novo and salvage pathways of dTTP synthesis. The protein is Thymidylate kinase of Synechococcus sp. (strain CC9902).